A 3305-amino-acid polypeptide reads, in one-letter code: Microtubule-actin cross-linking factor 1, isoforms 6/7 (3305 aa).

Disordered stretches follow at residues 1–24, 108–140, 152–202, 239–272, 333–381, 941–1007, and 2865–2896; these read MGKP…GEDE, VQKS…MPPN, LSEV…KSVD, AAAS…GFSE, EEWE…VAVS, EPAI…PEWS, and SVEP…MPIL. Residues 120-129 are compositionally biased toward basic and acidic residues; it reads PNAERKDNVN. EF-hand domains follow at residues 2958 to 2993 and 2994 to 3029; these read HKKS…SKFP and TTKL…NKDA. Residues Asp-2971, Asp-2973, Asp-2975, Lys-2977, Glu-2982, Asp-3007, Asp-3009, Asp-3011, Tyr-3013, and Glu-3018 each contribute to the Ca(2+) site. The 73-residue stretch at 3034–3106 folds into the GAR domain; the sequence is TDADKIEDEV…EFLVKNDPCR (73 aa). Positions 3122–3305 are disordered; sequence PEGASQGMTP…ASPRTPGPKR (184 aa). Low complexity predominate over residues 3142-3176; it reads SSRAASPTRSSSSASQSNHSCTSMPSSPATPASGT. Residues 3193–3212 are compositionally biased toward polar residues; sequence FHSSRTSLAGDTSNSSSPAS. A compositionally biased stretch (low complexity) spans 3227-3241; it reads SRPGSRAGSRAGSRA. Residues 3256 to 3266 show a composition bias toward polar residues; it reads ETQSACSDTSE. The segment covering 3267–3278 has biased composition (low complexity); it reads SSAAGGQGSSRR.

The protein localises to the cytoplasm. It is found in the cytoskeleton. The protein is Microtubule-actin cross-linking factor 1, isoforms 6/7 of Mus musculus (Mouse).